The primary structure comprises 294 residues: tRNA dimethylallyltransferase (294 aa).

11-18 (GPTAVGKT) provides a ligand contact to ATP. 13–18 (TAVGKT) contributes to the substrate binding site. The tract at residues 36-39 (DSQQ) is interaction with substrate tRNA.

It belongs to the IPP transferase family. As to quaternary structure, monomer. It depends on Mg(2+) as a cofactor.

It carries out the reaction adenosine(37) in tRNA + dimethylallyl diphosphate = N(6)-dimethylallyladenosine(37) in tRNA + diphosphate. Its function is as follows. Catalyzes the transfer of a dimethylallyl group onto the adenine at position 37 in tRNAs that read codons beginning with uridine, leading to the formation of N6-(dimethylallyl)adenosine (i(6)A). The protein is tRNA dimethylallyltransferase of Lactococcus lactis subsp. cremoris (strain MG1363).